The following is a 245-amino-acid chain: Phosphoribosylaminoimidazole-succinocarboxamide synthase (245 aa).

This sequence belongs to the SAICAR synthetase family.

The catalysed reaction is 5-amino-1-(5-phospho-D-ribosyl)imidazole-4-carboxylate + L-aspartate + ATP = (2S)-2-[5-amino-1-(5-phospho-beta-D-ribosyl)imidazole-4-carboxamido]succinate + ADP + phosphate + 2 H(+). It participates in purine metabolism; IMP biosynthesis via de novo pathway; 5-amino-1-(5-phospho-D-ribosyl)imidazole-4-carboxamide from 5-amino-1-(5-phospho-D-ribosyl)imidazole-4-carboxylate: step 1/2. The sequence is that of Phosphoribosylaminoimidazole-succinocarboxamide synthase from Nostoc punctiforme (strain ATCC 29133 / PCC 73102).